Here is a 138-residue protein sequence, read N- to C-terminus: Small ribosomal subunit protein bS6 (138 aa).

The interval 94–138 (VKQDGPLPTPKPTSKEDETEKEEVKPTEDKTESPAQEEKKEDSKE) is disordered. Basic and acidic residues predominate over residues 106–138 (TSKEDETEKEEVKPTEDKTESPAQEEKKEDSKE).

Belongs to the bacterial ribosomal protein bS6 family.

Its function is as follows. Binds together with bS18 to 16S ribosomal RNA. This chain is Small ribosomal subunit protein bS6, found in Prochlorococcus marinus (strain NATL1A).